The chain runs to 863 residues: Glycogen phosphorylase (863 aa).

At lysine 618 the chain carries N6-(pyridoxal phosphate)lysine.

It belongs to the glycogen phosphorylase family. The cofactor is pyridoxal 5'-phosphate.

The catalysed reaction is [(1-&gt;4)-alpha-D-glucosyl](n) + phosphate = [(1-&gt;4)-alpha-D-glucosyl](n-1) + alpha-D-glucose 1-phosphate. Functionally, phosphorylase is an important allosteric enzyme in carbohydrate metabolism. Enzymes from different sources differ in their regulatory mechanisms and in their natural substrates. However, all known phosphorylases share catalytic and structural properties. In Mycobacterium tuberculosis (strain ATCC 25618 / H37Rv), this protein is Glycogen phosphorylase (glgP).